A 729-amino-acid polypeptide reads, in one-letter code: DNA topoisomerase 3 (729 aa).

The Toprim domain occupies 3 to 136 (KKAVLAEKPS…VKRLWISSVT (134 aa)). Mg(2+) is bound by residues glutamate 9 and aspartate 105. Residues 153–590 (YETLYAAAAA…EMKEYAKAVV (438 aa)) enclose the Topo IA-type catalytic domain. The interaction with DNA stretch occupies residues 187–192 (SCGRVQ). Tyrosine 311 acts as the O-(5'-phospho-DNA)-tyrosine intermediate in catalysis. The tract at residues 680 to 708 (FEQRRKQNKHKNVSKREVQSYMKKQNKQD) is disordered.

This sequence belongs to the type IA topoisomerase family. Requires Mg(2+) as cofactor.

The enzyme catalyses ATP-independent breakage of single-stranded DNA, followed by passage and rejoining.. Releases the supercoiling and torsional tension of DNA, which is introduced during the DNA replication and transcription, by transiently cleaving and rejoining one strand of the DNA duplex. Introduces a single-strand break via transesterification at a target site in duplex DNA. The scissile phosphodiester is attacked by the catalytic tyrosine of the enzyme, resulting in the formation of a DNA-(5'-phosphotyrosyl)-enzyme intermediate and the expulsion of a 3'-OH DNA strand. The free DNA strand then undergoes passage around the unbroken strand, thus removing DNA supercoils. Finally, in the religation step, the DNA 3'-OH attacks the covalent intermediate to expel the active-site tyrosine and restore the DNA phosphodiester backbone. This chain is DNA topoisomerase 3, found in Shouchella clausii (strain KSM-K16) (Alkalihalobacillus clausii).